Reading from the N-terminus, the 488-residue chain is IQ domain-containing protein IQM1 (488 aa).

Residues 20–46 (RTNSFKRDDTNRHQNSPKSTMERSLSF) form a disordered region. The span at 32–46 (HQNSPKSTMERSLSF) shows a compositional bias: polar residues. One can recognise an IQ domain in the interval 106-135 (LDAAATTLQKVYKSYRTRRNLADCAVVVEE). Disordered stretches follow at residues 377–403 (SFKS…EKEE) and 448–472 (SPRV…VRVS). Positions 388-403 (RKEVSEEVEIPSEKEE) are enriched in basic and acidic residues.

In terms of assembly, interacts (via IQ domain) with CAM5. As to expression, highly expressed in leaf mesophyll cells. Expressed in roots, rosette and cauline leaves, stems, flowers and siliques.

The protein resides in the cytoplasm. Its subcellular location is the nucleus. In terms of biological role, involved in the modulation of stomatal movement. Promotes stomatal opening. May play a role in the regulation of chitin signaling. May be involved in biotic and abiotic stress responses. The sequence is that of IQ domain-containing protein IQM1 from Arabidopsis thaliana (Mouse-ear cress).